The following is a 518-amino-acid chain: Chromosomal replication initiator protein DnaA (518 aa).

The tract at residues 1-72 is domain I, interacts with DnaA modulators; that stretch reads MTLAEFWPLC…VREELAAGRS (72 aa). Residues 72 to 180 are domain II; sequence SAFVFKPGEG…DAEEARYEQT (109 aa). Positions 145–172 are disordered; it reads EPRQAAGSASRPESVAVAKARTDVQRDA. A domain III, AAA+ region region spans residues 181 to 397; that stretch reads NLSPDYTFDT…GAFNRVGASS (217 aa). ATP-binding residues include G225, G227, K228, and T229. The tract at residues 398-518 is domain IV, binds dsDNA; that stretch reads RFMNRPVIDI…YEKLLILIQN (121 aa).

The protein belongs to the DnaA family. As to quaternary structure, oligomerizes as a right-handed, spiral filament on DNA at oriC.

Its subcellular location is the cytoplasm. Functionally, plays an essential role in the initiation and regulation of chromosomal replication. ATP-DnaA binds to the origin of replication (oriC) to initiate formation of the DNA replication initiation complex once per cell cycle. Binds the DnaA box (a 9 base pair repeat at the origin) and separates the double-stranded (ds)DNA. Forms a right-handed helical filament on oriC DNA; dsDNA binds to the exterior of the filament while single-stranded (ss)DNA is stabiized in the filament's interior. The ATP-DnaA-oriC complex binds and stabilizes one strand of the AT-rich DNA unwinding element (DUE), permitting loading of DNA polymerase. After initiation quickly degrades to an ADP-DnaA complex that is not apt for DNA replication. Binds acidic phospholipids. The protein is Chromosomal replication initiator protein DnaA of Neisseria meningitidis serogroup B (strain ATCC BAA-335 / MC58).